The primary structure comprises 94 residues: Co-chaperonin GroES (94 aa).

Belongs to the GroES chaperonin family. As to quaternary structure, heptamer of 7 subunits arranged in a ring. Interacts with the chaperonin GroEL.

It localises to the cytoplasm. Together with the chaperonin GroEL, plays an essential role in assisting protein folding. The GroEL-GroES system forms a nano-cage that allows encapsulation of the non-native substrate proteins and provides a physical environment optimized to promote and accelerate protein folding. GroES binds to the apical surface of the GroEL ring, thereby capping the opening of the GroEL channel. This Lactobacillus gasseri (strain ATCC 33323 / DSM 20243 / BCRC 14619 / CIP 102991 / JCM 1131 / KCTC 3163 / NCIMB 11718 / NCTC 13722 / AM63) protein is Co-chaperonin GroES.